A 339-amino-acid polypeptide reads, in one-letter code: Glyceraldehyde-3-phosphate dehydrogenase (339 aa).

NAD(+)-binding positions include 12 to 13 (RI), Asp-39, Arg-84, and Ser-127. D-glyceraldehyde 3-phosphate is bound by residues 157-159 (SCT), Thr-188, Arg-203, 216-217 (TG), and Arg-239. Residue Cys-158 is the Nucleophile of the active site. Asn-320 contributes to the NAD(+) binding site.

The protein belongs to the glyceraldehyde-3-phosphate dehydrogenase family. Homotetramer.

It localises to the cytoplasm. It carries out the reaction D-glyceraldehyde 3-phosphate + phosphate + NAD(+) = (2R)-3-phospho-glyceroyl phosphate + NADH + H(+). Its pathway is carbohydrate degradation; glycolysis; pyruvate from D-glyceraldehyde 3-phosphate: step 1/5. Functionally, catalyzes the oxidative phosphorylation of glyceraldehyde 3-phosphate (G3P) to 1,3-bisphosphoglycerate (BPG) using the cofactor NAD. The first reaction step involves the formation of a hemiacetal intermediate between G3P and a cysteine residue, and this hemiacetal intermediate is then oxidized to a thioester, with concomitant reduction of NAD to NADH. The reduced NADH is then exchanged with the second NAD, and the thioester is attacked by a nucleophilic inorganic phosphate to produce BPG. The protein is Glyceraldehyde-3-phosphate dehydrogenase (gap) of Mycobacterium bovis (strain ATCC BAA-935 / AF2122/97).